Here is a 257-residue protein sequence, read N- to C-terminus: AN1-type zinc finger protein 2B (257 aa).

2 consecutive AN1-type zinc fingers follow at residues 4–52 and 94–142; these read PDLG…QKDI and KIFT…HQTS. Residues Cys10, Cys15, Cys25, Cys28, Cys33, His36, His42, Cys44, Cys100, Cys105, Cys115, Cys118, Cys123, His126, His132, and Cys134 each coordinate Zn(2+). The tract at residues 141–151 is VCP/p97-interacting motif (VIM); the sequence is TSRAGLAAISR. A disordered region spans residues 152-184; that stretch reads AQGLASTSTAPSPSRTLPSSSSPSRATPQLPTR. The segment covering 155–179 has biased composition (low complexity); the sequence is LASTSTAPSPSRTLPSSSSPSRATP. Phosphoserine; by MAPK14 occurs at positions 163, 173, and 187. UIM domains are found at residues 197-216 and 221-240; these read SEDE…AKPQ and QEED…AEYQ. Position 254 is a cysteine methyl ester (Cys254). A lipid anchor (S-geranylgeranyl cysteine) is attached at Cys254. Positions 254–257 match the CAAX motif motif; the sequence is CSLC. Residues 255–257 constitute a propeptide, removed in mature form; sequence SLC.

As to quaternary structure, binds 'Lys-48'-linked polyubiquitin chains of ubiquitinated proteins. Associates with the proteasome complex; upon exposure to arsenite. Interacts (via VIM motif) with VCP; the interaction is direct. Interacts with BAG6. Interacts with IGF1R (nascent precursor form). Interacts with DERL1, FAF2, NPLOC4 and UFD1; probably through VCP. Phosphorylated by MAPK14. Phosphorylation has no effect on association with the proteasome complex.

It is found in the endoplasmic reticulum membrane. Plays a role in protein homeostasis by regulating both the translocation and the ubiquitin-mediated proteasomal degradation of nascent proteins at the endoplasmic reticulum. It is involved in the regulation of signal-mediated translocation of proteins into the endoplasmic reticulum. It also plays a role in the ubiquitin-mediated proteasomal degradation of proteins for which signal-mediated translocation to the endoplasmic reticulum has failed. May therefore function in the endoplasmic reticulum stress-induced pre-emptive quality control, a mechanism that selectively attenuates the translocation of newly synthesized proteins into the endoplasmic reticulum and reroutes them to the cytosol for proteasomal degradation. By controlling the steady-state expression of the IGF1R receptor, indirectly regulates the insulin-like growth factor receptor signaling pathway. This chain is AN1-type zinc finger protein 2B, found in Mus musculus (Mouse).